Here is a 250-residue protein sequence, read N- to C-terminus: N-acyl homoserine lactonase (250 aa).

Zn(2+) contacts are provided by histidine 104, histidine 106, aspartate 108, histidine 109, histidine 169, aspartate 191, and histidine 235.

The protein belongs to the metallo-beta-lactamase superfamily. As to quaternary structure, monomer. It depends on Zn(2+) as a cofactor.

It catalyses the reaction an N-acyl-L-homoserine lactone + H2O = an N-acyl-L-homoserine + H(+). In terms of biological role, catalyzes hydrolysis of N-hexanoyl-(S)-homoserine lactone, but not the R-enantiomer. Hydrolyzes short- and long-chain N-acyl homoserine lactones with or without 3-oxo substitution at C3, has maximum activity on C10-AHL. This is N-acyl homoserine lactonase from Bacillus thuringiensis subsp. indiana.